We begin with the raw amino-acid sequence, 47 residues long: Photosystem II reaction center protein K (47 aa).

Residues 1–10 constitute a propeptide that is removed on maturation; that stretch reads MAAFSLDLLA. Residues 19 to 39 form a helical membrane-spanning segment; the sequence is FGPLIDILPIIPVFFLLLAFV.

This sequence belongs to the PsbK family. As to quaternary structure, PSII is composed of 1 copy each of membrane proteins PsbA, PsbB, PsbC, PsbD, PsbE, PsbF, PsbH, PsbI, PsbJ, PsbK, PsbL, PsbM, PsbT, PsbX, PsbY, PsbZ, Psb30/Ycf12, peripheral proteins PsbO, CyanoQ (PsbQ), PsbU, PsbV and a large number of cofactors. It forms dimeric complexes.

Its subcellular location is the cellular thylakoid membrane. Its function is as follows. One of the components of the core complex of photosystem II (PSII). PSII is a light-driven water:plastoquinone oxidoreductase that uses light energy to abstract electrons from H(2)O, generating O(2) and a proton gradient subsequently used for ATP formation. It consists of a core antenna complex that captures photons, and an electron transfer chain that converts photonic excitation into a charge separation. The chain is Photosystem II reaction center protein K from Synechococcus sp. (strain WH7803).